A 392-amino-acid polypeptide reads, in one-letter code: Formate-dependent phosphoribosylglycinamide formyltransferase (392 aa).

Residues 22–23 and glutamate 82 contribute to the N(1)-(5-phospho-beta-D-ribosyl)glycinamide site; that span reads EL. Residues arginine 114, lysine 155, 160–165, 195–198, and glutamate 203 contribute to the ATP site; these read SSGKGQ and EGVV. The 190-residue stretch at 119–308 folds into the ATP-grasp domain; sequence RLAAEELGLP…EFALHVRAFL (190 aa). Mg(2+) contacts are provided by glutamate 267 and glutamate 279. Residues aspartate 286, lysine 355, and 362–363 contribute to the N(1)-(5-phospho-beta-D-ribosyl)glycinamide site; that span reads RR.

This sequence belongs to the PurK/PurT family. In terms of assembly, homodimer.

It catalyses the reaction N(1)-(5-phospho-beta-D-ribosyl)glycinamide + formate + ATP = N(2)-formyl-N(1)-(5-phospho-beta-D-ribosyl)glycinamide + ADP + phosphate + H(+). It participates in purine metabolism; IMP biosynthesis via de novo pathway; N(2)-formyl-N(1)-(5-phospho-D-ribosyl)glycinamide from N(1)-(5-phospho-D-ribosyl)glycinamide (formate route): step 1/1. Functionally, involved in the de novo purine biosynthesis. Catalyzes the transfer of formate to 5-phospho-ribosyl-glycinamide (GAR), producing 5-phospho-ribosyl-N-formylglycinamide (FGAR). Formate is provided by PurU via hydrolysis of 10-formyl-tetrahydrofolate. In Salmonella dublin (strain CT_02021853), this protein is Formate-dependent phosphoribosylglycinamide formyltransferase.